Consider the following 2388-residue polypeptide: Highly reducing polyketide synthase Preu1 (2388 aa).

The region spanning 7–432 (NDDIAIVGLA…GTNAHVILDD (426 aa)) is the Ketosynthase family 3 (KS3) domain. Residues Cys-180, His-315, and His-355 each act as for beta-ketoacyl synthase activity in the active site. Residues 549–875 (GFVFTGQGAQ…SSVLMRGEDG (327 aa)) are malonyl-CoA:ACP transacylase (MAT) domain. The active-site For malonyltransferase activity is Ser-641. Residues 940-1074 (HDLLGAPTQD…GLGKIHYRPE (135 aa)) form an N-terminal hotdog fold region. The region spanning 940 to 1256 (HDLLGAPTQD…CRELPNGNSQ (317 aa)) is the PKS/mFAS DH domain. The tract at residues 941-1251 (DLLGAPTQDS…VEGLRCRELP (311 aa)) is dehydratase (DH) domain. The Proton acceptor; for dehydratase activity role is filled by His-972. The interval 1102–1256 (TASISPVDFY…CRELPNGNSQ (155 aa)) is C-terminal hotdog fold. The Proton donor; for dehydratase activity role is filled by Asp-1167. Residues 1676–1983 (KLPSDARFTS…VPTGLGKAVL (308 aa)) form an enoyl reductase (ER) domain region. The interval 2007 to 2191 (ATYVLAGGLG…AATSVDLGLM (185 aa)) is ketoreductase (KR) domain. Residues 2303–2380 (QANGIVLEAL…ALAEKISKAS (78 aa)) form the Carrier domain. Ser-2340 carries the post-translational modification O-(pantetheine 4'-phosphoryl)serine.

The cofactor is pantetheine 4'-phosphate.

Highly reducing polyketide synthase; part of a gene cluster that mediates the biosynthesis of a yet unidentified natural product. The chain is Highly reducing polyketide synthase Preu1 from Preussia isomera (Coprophilous fungus).